Reading from the N-terminus, the 509-residue chain is Maturase K (509 aa).

This sequence belongs to the intron maturase 2 family. MatK subfamily.

It is found in the plastid. The protein resides in the chloroplast. In terms of biological role, usually encoded in the trnK tRNA gene intron. Probably assists in splicing its own and other chloroplast group II introns. The protein is Maturase K of Eucommia ulmoides (Hardy rubber tree).